The chain runs to 1002 residues: Chitin synthase II (1002 aa).

Disordered stretches follow at residues 1–165 (MDRP…GRTS) and 178–209 (LDGSDDVFGPETDLSDSRPLPTHRDSFMSGSQ). Residues 63–78 (SYQPSVVSSHSRSASV) show a composition bias toward low complexity. Asparagine 123 carries N-linked (GlcNAc...) asparagine glycosylation. Residue asparagine 336 is glycosylated (N-linked (GlcNAc...) asparagine). 8 helical membrane passes run 627–647 (WLNGAFFAAVYSLVQFRQILA), 669–689 (LLFTYFSLANFYLTFYFVAGG), 704–724 (SVIFTILRYTCVLLIATQFIL), 740–760 (SMIIYGVIMTYTSFACIYIVV), 780–800 (LIVSMASTIGLYFVMSFLYLE), 808–828 (SLQYFLLLPSYICTLQVYAFC), 906–926 (YMVVTWMIANGILAMAVSEIY), and 940–960 (ILWAVASLAIFRALGSTTFAI).

It belongs to the chitin synthase family. Class II subfamily. Expressed in hyphal bodies.

It localises to the cell membrane. The catalysed reaction is [(1-&gt;4)-N-acetyl-beta-D-glucosaminyl](n) + UDP-N-acetyl-alpha-D-glucosamine = [(1-&gt;4)-N-acetyl-beta-D-glucosaminyl](n+1) + UDP + H(+). Functionally, polymerizes chitin, a structural polymer of the cell wall and septum, by transferring the sugar moiety of UDP-GlcNAc to the non-reducing end of the growing chitin polymer. Contributes to the production of conidia and the ability of fungal conidia to germinate. Involved in fungal stress tolerances. In Metarhizium acridum (strain CQMa 102), this protein is Chitin synthase II.